The chain runs to 283 residues: Adenylate dimethylallyltransferase (283 aa).

The protein belongs to the isopentenyl transferase family.

The catalysed reaction is dimethylallyl diphosphate + AMP = N(6)-(dimethylallyl)adenosine 5'-phosphate + diphosphate. In terms of biological role, transfers dimethylallyl groups to AMP as part of the biosynthesis of cytokinin phytohormones like isopentenyl adenine or discadenine which controle spore formation and viability. In Dictyostelium discoideum (Social amoeba), this protein is Adenylate dimethylallyltransferase (iptA).